The primary structure comprises 75 residues: Antitoxin MT0312 (75 aa).

Its function is as follows. Antitoxin component of a type II toxin-antitoxin (TA) system. In Mycobacterium tuberculosis (strain CDC 1551 / Oshkosh), this protein is Antitoxin MT0312.